Reading from the N-terminus, the 418-residue chain is AP-3 complex subunit mu-2 (418 aa).

The MHD domain occupies 176–417 (NNEAYFDVIE…MTKAGKFQVR (242 aa)).

The protein belongs to the adaptor complexes medium subunit family. In terms of assembly, AP-3 associates with the BLOC-1 complex. Adaptor protein complex 3 (AP-3) is a heterotetramer composed of two large adaptins (delta-type subunit AP3D1 and beta-type subunit AP3B1 or AP3B2), a medium adaptin (mu-type subunit AP3M1 or AP3M2) and a small adaptin (sigma-type subunit APS1 or AP3S2).

Its subcellular location is the golgi apparatus. The protein resides in the cytoplasmic vesicle membrane. Part of the AP-3 complex, an adaptor-related complex which is not clathrin-associated. The complex is associated with the Golgi region as well as more peripheral structures. It facilitates the budding of vesicles from the Golgi membrane and may be directly involved in trafficking to lysosomes. In concert with the BLOC-1 complex, AP-3 is required to target cargos into vesicles assembled at cell bodies for delivery into neurites and nerve terminals. This is AP-3 complex subunit mu-2 (AP3M2) from Homo sapiens (Human).